The following is a 109-amino-acid chain: Protein ripply2 (109 aa).

Residues 1 to 15 (MENITFTSGLNSEMD) show a composition bias toward polar residues. Disordered regions lie at residues 1–42 (MENI…RPAD) and 88–109 (YEDP…KELR). The WRPW motif signature appears at 20-23 (WRPW). Residues 30–42 (KAPDYKPYKRPAD) are compositionally biased toward basic and acidic residues. A ripply homology domain region spans residues 53-88 (HPVKLFWPKSQCFDYLYEDAEVLLRNYPVQATICLY). Acidic residues predominate over residues 89–109 (EDPDTEDEEDYSDEEDEKELR).

Belongs to the ripply family. As to expression, first expressed in the paraxial mesoderm at the 90% epiboly stage, and subsequently confined to the presomitic mesoderm. Expressed in the rostral compartment of S-I and S-II.

Its subcellular location is the nucleus. Its function is as follows. Plays a role in somitogenesis. Required for somite segregation and establishment of rostrocaudal polarity in somites. The chain is Protein ripply2 from Danio rerio (Zebrafish).